We begin with the raw amino-acid sequence, 481 residues long: Aspartyl/glutamyl-tRNA(Asn/Gln) amidotransferase subunit B (481 aa).

Belongs to the GatB/GatE family. GatB subfamily. Heterotrimer of A, B and C subunits.

The enzyme catalyses L-glutamyl-tRNA(Gln) + L-glutamine + ATP + H2O = L-glutaminyl-tRNA(Gln) + L-glutamate + ADP + phosphate + H(+). It carries out the reaction L-aspartyl-tRNA(Asn) + L-glutamine + ATP + H2O = L-asparaginyl-tRNA(Asn) + L-glutamate + ADP + phosphate + 2 H(+). In terms of biological role, allows the formation of correctly charged Asn-tRNA(Asn) or Gln-tRNA(Gln) through the transamidation of misacylated Asp-tRNA(Asn) or Glu-tRNA(Gln) in organisms which lack either or both of asparaginyl-tRNA or glutaminyl-tRNA synthetases. The reaction takes place in the presence of glutamine and ATP through an activated phospho-Asp-tRNA(Asn) or phospho-Glu-tRNA(Gln). In Pseudomonas fluorescens (strain SBW25), this protein is Aspartyl/glutamyl-tRNA(Asn/Gln) amidotransferase subunit B.